A 432-amino-acid polypeptide reads, in one-letter code: MDWDLNAAGAWDLAELERDHAAAAPSSGGHAANAAAAGTGTESRPPAPGAAGAPAECSVDLKLGGMGECEPGAARREREAAAGAAKRPRPAGPGGQQQQQQCPSCAVDGCRADLGKCRDYHRRHKVCEAHSKTPVVVVAGREMRFCQQCSRFHLLAEFDADKRSCRKRLDGHNRRRRKPQPDTMASASFIASQQGTRFSPFAHPRLEASWPPGVMKTEESPYHITHQIPLGSSSSSRQQHFVALGAATPAYAKEGRRFPFLQEGEISFATGVVLEPPAAAPACQPLLRTGAPSESSGAGGSKMFSDQGLARVLDSDCALSLLSAPANSSGIDVSRMVRPTEHVPMAQQPVVPGLQFGSASWFPRPQASTGGSFVPSCPAAVEGEQQLNAVLGPNDSEVSMNYGGMFHVGGGSGGGEGSSDGGTSSSMPFSWQ.

Disordered stretches follow at residues 20–55 and 68–102; these read HAAAAPSSGGHAANAAAAGTGTESRPPAPGAAGAPA and ECEPGAARREREAAAGAAKRPRPAGPGGQQQQQQC. The span at 22-41 shows a compositional bias: low complexity; it reads AAAPSSGGHAANAAAAGTGT. The SBP-type zinc-finger motif lies at 102–179; that stretch reads CPSCAVDGCR…DGHNRRRRKP (78 aa). Residues Cys105, Cys110, Cys127, His130, Cys146, Cys149, His153, and Cys165 each coordinate Zn(2+). Gly residues predominate over residues 409 to 420; it reads GGGSGGGEGSSD. The segment at 409 to 432 is disordered; the sequence is GGGSGGGEGSSDGGTSSSMPFSWQ.

Monomer and homodimer. In terms of tissue distribution, strongly expressed in immature ears and weakly in husks. Found in the inflorescence meristem of the developing ear, in the spikelet pair primordia, the glume primordia, the cupule forming region and other floral organs. Not detected in other tissues.

Functionally, SBP transcriptional regulator probably involved in the domestication of maize. Acts as a transcriptional repressor binding to a 5'-GTAC-3' motif. May repress the growth of lateral branches in length and numbers. The polypeptide is Teosinte glume architecture 1 (Zea mays (Maize)).